Here is a 103-residue protein sequence, read N- to C-terminus: 4-amino-4-deoxychorismate mutase (103 aa).

A Chorismate mutase domain is found at 1–92 (MTEQNELQRL…EMCRVEDLVM (92 aa)).

It catalyses the reaction 4-amino-4-deoxychorismate = 4-amino-4-deoxyprephenate. Its pathway is antibiotic biosynthesis. In terms of biological role, involved in chloramphenicol biosynthesis. Probably catalyzes the conversion of 4-amino-4-deoxychorismate to 4-amino-4-deoxyprephenate. In Streptomyces venezuelae (strain ATCC 10712 / CBS 650.69 / DSM 40230 / JCM 4526 / NBRC 13096 / PD 04745), this protein is 4-amino-4-deoxychorismate mutase.